Here is a 1377-residue protein sequence, read N- to C-terminus: DNA-directed RNA polymerase subunit beta' (1377 aa).

Zn(2+) contacts are provided by C70, C72, C85, and C88. Mg(2+) is bound by residues D460, D462, and D464. Zn(2+) is bound by residues C808, C882, C889, and C892.

This sequence belongs to the RNA polymerase beta' chain family. In terms of assembly, the RNAP catalytic core consists of 2 alpha, 1 beta, 1 beta' and 1 omega subunit. When a sigma factor is associated with the core the holoenzyme is formed, which can initiate transcription. Mg(2+) serves as cofactor. The cofactor is Zn(2+).

It catalyses the reaction RNA(n) + a ribonucleoside 5'-triphosphate = RNA(n+1) + diphosphate. Its function is as follows. DNA-dependent RNA polymerase catalyzes the transcription of DNA into RNA using the four ribonucleoside triphosphates as substrates. The protein is DNA-directed RNA polymerase subunit beta' of Geotalea uraniireducens (strain Rf4) (Geobacter uraniireducens).